Here is a 147-residue protein sequence, read N- to C-terminus: MVHLSAEEKEAVLGLWGKVNVDEVGGEALGRLLVVYPWTQRFFESFGDLSNADAVMGNPKVKAHGKKVLQSFSDGLKHLDNLKGTFAKLSELHCDQLHVDPENFRLLGNVIVVVLARRLGHDFNPNVQAAFQKVVAGVANALAHKYH.

N-acetylvaline is present on valine 2. The 145-residue stretch at 3-147 (HLSAEEKEAV…VANALAHKYH (145 aa)) folds into the Globin domain. Serine 45 carries the post-translational modification Phosphoserine. At lysine 60 the chain carries N6-acetyllysine. Heme b is bound at residue histidine 64. Lysine 83 carries the N6-acetyllysine modification. Histidine 93 provides a ligand contact to heme b. Cysteine 94 is subject to S-nitrosocysteine. Lysine 145 is modified (N6-acetyllysine).

Belongs to the globin family. As to quaternary structure, heterotetramer of two alpha chains and two beta chains. In terms of tissue distribution, red blood cells.

Its function is as follows. Involved in oxygen transport from the lung to the various peripheral tissues. This chain is Hemoglobin subunit beta (HBB), found in Sus scrofa (Pig).